The chain runs to 470 residues: Acetyl-CoA decarbonylase/synthase complex subunit beta 2 (470 aa).

[Ni-Fe-S] cluster is bound by residues Cys189, Cys192, Cys278, and Cys280.

This sequence belongs to the CdhC family. In terms of assembly, monomer. The ACDS complex is made up of alpha, epsilon, beta, gamma and delta chains with a probable stoichiometry of (alpha(2)epsilon(2))(4)-beta(8)-(gamma(1)delta(1))(8) (Potential). [Ni-Fe-S] cluster serves as cofactor.

The enzyme catalyses Co(I)-[corrinoid Fe-S protein] + acetyl-CoA + H(+) = methyl-Co(III)-[corrinoid Fe-S protein] + CO + CoA. It participates in one-carbon metabolism; methanogenesis from acetate. In terms of biological role, part of a complex that catalyzes the reversible cleavage of acetyl-CoA, allowing growth on acetate as sole source of carbon and energy. The alpha-epsilon complex generates CO from CO(2), while the beta subunit (this protein) combines the CO with CoA and a methyl group to form acetyl-CoA. The methyl group, which is incorporated into acetyl-CoA, is transferred to the beta subunit by a corrinoid iron-sulfur protein (the gamma-delta complex). This is Acetyl-CoA decarbonylase/synthase complex subunit beta 2 (cdhC2) from Methanosarcina acetivorans (strain ATCC 35395 / DSM 2834 / JCM 12185 / C2A).